We begin with the raw amino-acid sequence, 1437 residues long: Envelopment polyprotein (1437 aa).

The N-terminal stretch at 1 to 21 (MAISTSLLIVALLIKLCLVNT) is a signal peptide. The Lumenal segment spans residues 22-207 (APPISKCFQD…GYMASSICQN (186 aa)). 2 N-linked (GlcNAc...) asparagine; by host glycosylation sites follow: Asn65 and Asn88. The chain crosses the membrane as a helical span at residues 208-228 (IELIIIIILTLAIFIFMCIIT). Residues 229-312 (RTYICYLMLP…RVARSLCKSK (84 aa)) lie on the Cytoplasmic side of the membrane. The helical transmembrane segment at 313–333 (GSSLVISILTAMLILSFITPL) threads the bilayer. Residues 334–373 (EAMTTNYPDDKKFTLKEVNDIVLGRDMEQELKSSILILMS) are Lumenal-facing. The chain crosses the membrane as a helical span at residues 374 to 394 (ICGIGIILIFFGLTVLLEIVL). At 395–460 (ELIAKRSTIF…TYYIKIRNLK (66 aa)) the chain is on the cytoplasmic side. Residues 461–481 (LIMLIFSIVILMQNATMLVVA) form a helical membrane-spanning segment. The Lumenal portion of the chain corresponds to 482-1391 (GENCWTNTEI…EPLNNFFGNY (910 aa)). Asn627 and Asn1173 each carry an N-linked (GlcNAc...) asparagine; by host glycan. A helical membrane pass occupies residues 1392–1412 (LNMFLYILGGIILLFLALYIL). The Cytoplasmic segment spans residues 1413-1437 (MPMCARLRDELKRNERLHQMEMKKR).

This sequence belongs to the orthobunyavirus envelope glycoprotein family. Glycoprotein C and Glycoprotein N interact with each other. Post-translationally, specific enzymatic cleavages in vivo yield mature proteins including nonstructural protein NSm, Glycoprotein C, and Glycoprotein N.

The protein resides in the virion membrane. It localises to the host Golgi apparatus membrane. It is found in the host endoplasmic reticulum membrane. Functionally, glycoprotein C and Glycoprotein N interact with each other and are present at the surface of the virion. They are able to attach the virion to a cell receptor and to promote fusion of membranes after endocytosis of the virion. This chain is Envelopment polyprotein (GP), found in Culex.